We begin with the raw amino-acid sequence, 150 residues long: Phosphoribosyl-AMP cyclohydrolase (150 aa).

Position 93 (Asp93) interacts with Mg(2+). Residue Cys94 coordinates Zn(2+). Mg(2+) is bound by residues Asp95 and Asp97. Residues Cys112 and Cys119 each contribute to the Zn(2+) site.

The protein belongs to the PRA-CH family. In terms of assembly, homodimer. The cofactor is Mg(2+). Requires Zn(2+) as cofactor.

It is found in the cytoplasm. The catalysed reaction is 1-(5-phospho-beta-D-ribosyl)-5'-AMP + H2O = 1-(5-phospho-beta-D-ribosyl)-5-[(5-phospho-beta-D-ribosylamino)methylideneamino]imidazole-4-carboxamide. The protein operates within amino-acid biosynthesis; L-histidine biosynthesis; L-histidine from 5-phospho-alpha-D-ribose 1-diphosphate: step 3/9. Its function is as follows. Catalyzes the hydrolysis of the adenine ring of phosphoribosyl-AMP. The sequence is that of Phosphoribosyl-AMP cyclohydrolase from Rhizobium leguminosarum bv. trifolii (strain WSM2304).